The following is a 465-amino-acid chain: Cysteine--tRNA ligase (465 aa).

Zn(2+) is bound at residue cysteine 29. Positions 31 to 41 (PTVYNYIHIGN) match the 'HIGH' region motif. Residues cysteine 209, histidine 234, and glutamate 238 each contribute to the Zn(2+) site. The short motif at 266–270 (KMSKS) is the 'KMSKS' region element. Lysine 269 serves as a coordination point for ATP. Serine 270 is modified (phosphoserine).

Belongs to the class-I aminoacyl-tRNA synthetase family. In terms of assembly, monomer. Requires Zn(2+) as cofactor.

It localises to the cytoplasm. It catalyses the reaction tRNA(Cys) + L-cysteine + ATP = L-cysteinyl-tRNA(Cys) + AMP + diphosphate. In Bacillus cereus (strain G9842), this protein is Cysteine--tRNA ligase.